A 533-amino-acid polypeptide reads, in one-letter code: Adenine deaminase (533 aa).

This sequence belongs to the metallo-dependent hydrolases superfamily. Adenine deaminase family. Mn(2+) serves as cofactor.

It catalyses the reaction adenine + H2O + H(+) = hypoxanthine + NH4(+). The polypeptide is Adenine deaminase (Sulfurovum sp. (strain NBC37-1)).